Consider the following 395-residue polypeptide: MLRRLLERPCTLALLVGSQLAVMMYLSLGGFRSLSALFGRDPGPTFDYSHPHDVYSNLSHLPAAPGAAGAPPAQALPYCPERSPFLVGPVSVSFSPVPSLAEIVERNPRVESGGRYRPAGCEPRSRTAIIVPHRAREHHLRLLLYHLHPFLQRQQLAYGIYVIHQAGNGTFNRAKLLNVGVREALRDEEWDCLFLHDVDLLPENDHNLYVCDPRGPRHVAVAMNKFGYSLPYPQYFGGVSALTPDQYLKMNGFPNEYWGWGGEDDDIATRVRLAGMKISRPPTSVGHYKMVKHRGDKGNEENPHRFDLLVRTQNSWTQDGMNSLTYRLLARELGPLYTNITADIGTDPRGPRSPSGPRYPPGSSQAFRQEMLQRRPPARPGPLPTANHTAPRGSH.

Topologically, residues 1–10 are cytoplasmic; it reads MLRRLLERPC. Residues 11–31 traverse the membrane as a helical; Signal-anchor for type II membrane protein segment; it reads TLALLVGSQLAVMMYLSLGGF. The Lumenal portion of the chain corresponds to 32-395; sequence RSLSALFGRD…ANHTAPRGSH (364 aa). Residue N57 is glycosylated (N-linked (GlcNAc...) asparagine). The cysteines at positions 79 and 121 are disulfide-linked. A UDP-alpha-D-galactose-binding site is contributed by 132–136; sequence PHRAR. N168 is a glycosylation site (N-linked (GlcNAc...) asparagine). UDP-alpha-D-galactose-binding positions include 171 to 173, 198 to 199, Y228, and W260; these read FNR and VD. C192 and C211 are disulfide-bonded. D199 serves as a coordination point for Mn(2+). N-acetyl-D-glucosamine is bound at residue 262–265; the sequence is GEDD. Residue H293 coordinates Mn(2+). Residue 293 to 295 participates in UDP-alpha-D-galactose binding; it reads HRG. R305 provides a ligand contact to N-acetyl-D-glucosamine. N-linked (GlcNAc...) asparagine glycosylation is present at N339. The segment at 340-395 is disordered; sequence ITADIGTDPRGPRSPSGPRYPPGSSQAFRQEMLQRRPPARPGPLPTANHTAPRGSH. A compositionally biased stretch (low complexity) spans 352–364; the sequence is RSPSGPRYPPGSS. A glycan (N-linked (GlcNAc...) asparagine) is linked at N387.

Belongs to the glycosyltransferase 7 family. Mn(2+) is required as a cofactor.

The protein localises to the golgi apparatus. It localises to the golgi stack membrane. The enzyme catalyses an N-acetyl-beta-D-glucosaminyl derivative + UDP-alpha-D-galactose = a beta-D-galactosyl-(1-&gt;4)-N-acetyl-beta-D-glucosaminyl derivative + UDP + H(+). The catalysed reaction is N-acetyl-D-glucosamine + UDP-alpha-D-galactose = beta-D-galactosyl-(1-&gt;4)-N-acetyl-D-glucosamine + UDP + H(+). It catalyses the reaction a beta-D-GlcNAc-(1-&gt;3)-beta-D-Gal-(1-&gt;4)-beta-D-Glc-(1&lt;-&gt;1)-Cer(d18:1(4E)) + UDP-alpha-D-galactose = a neolactoside nLc4Cer(d18:1(4E)) + UDP + H(+). It carries out the reaction a beta-D-glucosylceramide + UDP-alpha-D-galactose = a beta-D-galactosyl-(1-&gt;4)-beta-D-glucosyl-(1&lt;-&gt;1)-ceramide + UDP + H(+). The enzyme catalyses a neolactoside IV(3)-beta-GlcNAc-nLc4Cer + UDP-alpha-D-galactose = a neolactoside nLc6Cer + UDP + H(+). It participates in protein modification; protein glycosylation. Responsible for the synthesis of complex-type N-linked oligosaccharides in many glycoproteins as well as the carbohydrate moieties of glycolipids. The protein is Beta-1,4-galactosyltransferase 3 of Mus musculus (Mouse).